Reading from the N-terminus, the 472-residue chain is PEP-dependent dihydroxyacetone kinase, phosphoryl donor subunit DhaM (472 aa).

The PTS EIIA type-4 domain occupies 1–135; that stretch reads MVNLVIVSHS…NALEAKRVQL (135 aa). The active-site Tele-phosphohistidine intermediate is His9. Residues 156–243 form the HPr domain; that stretch reads ARSVSVVIQN…ALAAENFGEP (88 aa). His170 serves as the catalytic Pros-phosphohistidine intermediate. The segment at 266–472 is PTS EI-like, N-terminal part; it reads PQPQDRISRE…DIPGKRVIRG (207 aa). Residue His432 is the Tele-phosphohistidine intermediate of the active site.

This sequence belongs to the PEP-utilizing enzyme family. Homodimer. The dihydroxyacetone kinase complex is composed of a homodimer of DhaM, a homodimer of DhaK and the subunit DhaL.

It catalyses the reaction dihydroxyacetone + phosphoenolpyruvate = dihydroxyacetone phosphate + pyruvate. Its function is as follows. Component of the dihydroxyacetone kinase complex, which is responsible for the phosphoenolpyruvate (PEP)-dependent phosphorylation of dihydroxyacetone. DhaM serves as the phosphoryl donor. Is phosphorylated by phosphoenolpyruvate in an EI- and HPr-dependent reaction, and a phosphorelay system on histidine residues finally leads to phosphoryl transfer to DhaL and dihydroxyacetone. This Klebsiella michiganensis (strain ATCC 8724 / DSM 4798 / JCM 20051 / NBRC 3318 / NRRL B-199 / KCTC 1686 / BUCSAV 143 / CCM 1901) protein is PEP-dependent dihydroxyacetone kinase, phosphoryl donor subunit DhaM.